We begin with the raw amino-acid sequence, 93 residues long: MRVTLVVLLALFLALQYRLWFGKNSLPDYWRLQQEVSNQKNTNENLERRNQLIYADIEDLREGEDALEERARNELGMVKKDEVFFRLVPDRNP.

The Cytoplasmic segment spans residues 1 to 3; that stretch reads MRV. The chain crosses the membrane as a helical span at residues 4 to 21; that stretch reads TLVVLLALFLALQYRLWF. At 22–93 the chain is on the periplasmic side; that stretch reads GKNSLPDYWR…FFRLVPDRNP (72 aa). Residues 28–75 are a coiled coil; it reads DYWRLQQEVSNQKNTNENLERRNQLIYADIEDLREGEDALEERARNEL.

The protein belongs to the FtsB family. In terms of assembly, part of a complex composed of FtsB, FtsL and FtsQ.

It is found in the cell inner membrane. In terms of biological role, essential cell division protein. May link together the upstream cell division proteins, which are predominantly cytoplasmic, with the downstream cell division proteins, which are predominantly periplasmic. This Idiomarina loihiensis (strain ATCC BAA-735 / DSM 15497 / L2-TR) protein is Cell division protein FtsB.